We begin with the raw amino-acid sequence, 250 residues long: Pre-protein VI (250 aa).

Residues 1-33 (MEDINFASLAPRHGSRPFMGNWQDIGTSNMSGG) constitute a propeptide that is removed on maturation. Residues 34-54 (AFSWGSLWSGIKNFGSTVKNY) form an amphipathic alpha-helix essential for membrane lytic activity region. The tract at residues 36 to 53 (SWGSLWSGIKNFGSTVKN) is involved in endosomal membrane lysis. The segment at 48-74 (GSTVKNYGSKAWNSSTGQMLRDKLKEQ) is interaction with hexon protein. The short motif at 67-76 (LRDKLKEQNF) is the Nuclear export signal element. The segment at 103-148 (INSKLDPRPPVEEPPPAVETVSPEGRGEKRPRPDREETLVTQIDEP) is disordered. Serine 124 carries the post-translational modification Phosphoserine; by host. Positions 127 to 140 (GRGEKRPRPDREET) are enriched in basic and acidic residues. The Nuclear localization signal motif lies at 131 to 135 (KRPRP). Threonine 143 carries the post-translational modification Phosphothreonine; by host. The short motif at 148 to 151 (PPSY) is the PPXY motif element. The Nuclear export signal motif lies at 231–242 (STLNSIVGLGVQ). The tract at residues 233-239 (LNSIVGL) is interaction with hexon protein. Residues 240–250 (GVQSLKRRRCF) form a binds to importin alpha/beta, involved in hexon nuclear import region. The Nuclear localization signal motif lies at 245-248 (KRRR).

It belongs to the adenoviridae protein VI family. Interacts with hexon protein; this interaction allows nuclear import of hexon trimers and possibly pre-capsid assembly. Interacts (via C-terminal NLS) with importin alpha/beta. In terms of assembly, interacts (via PPxY motif) with host NEDD4 ubiquitine ligase; this interaction might play a role in virus intracellular transport during entry. Part of a complex composed of the core-capsid bridging protein, the endosome lysis protein VI and the hexon-linking protein VIII; these interactions bridge the virus core to the capsid. Interacts with peripentonal hexons; this interaction stabilizes the capsid by gluing two peripentonal hexons together and joining them with an adjacent group-of-nine hexon. As to quaternary structure, heterodimer with the viral protease; disulfide-linked. Interacts with the viral protease. Post-translationally, ubiquitinated by Nedd4 following partial capsid disassembly; which might play a role in intracellular virus movement during entry. Contains the major nuclear import and export signals. Proteolytically removed during virion maturation. The processing of the C-terminus turns the precursor into a mature viral structural protein and abrogates its ability to promote hexon import and act as a potential chaperone protein.

The protein resides in the host nucleus. It localises to the host cytoplasm. The protein localises to the virion. Functionally, during virus assembly, promotes hexon trimers nuclear import through nuclear pore complexes via an importin alpha/beta-dependent mechanism. By analogy to herpesviruses capsid assembly, might act as a chaperone to promote the formation of the icosahedral capsid. Structural component of the virion that provides increased stability to the particle shell through its interaction with the core-capsid bridging protein and the hexon-linking protein VIII. Fibers shedding during virus entry into host cell allows the endosome lysis protein to be exposed as a membrane-lytic peptide. Exhibits pH-independent membrane fragmentation activity and probably mediates viral rapid escape from host endosome via organellar membrane lysis. It is not clear if it then remains partially associated with the capsid and involved in the intracellular microtubule-dependent transport of capsid to the nucleus, or if it is lost during endosomal penetration. In terms of biological role, cofactor that activates the viral protease. Binds to viral protease in a 1:1 ratio. The sequence is that of Pre-protein VI from Homo sapiens (Human).